The following is a 287-amino-acid chain: MNKSIAPAPVVAAGDVKFGNSLPLSVIAGPCQLESRAHALEVASALKEIATRLGIGLVYKTSFDKANRTSAASARGIGLDAALAIFAEIRDSVGLPVLTDVHEAEQCARAAEAVDILQIPAFLCRQTDLLLAAAATGRIVNVKKGQFLAPWDMGNVVAKITTAGNQKVLVTERGASFGYNTLVSDMRALPIMARTTGAPVIFDATHSVQQPGGKGTSSGGEREFVPVLARAAVAVGVAGVFIETHPDPDHAPSDGPNMVPLRDFEALLRTLMEFDALAKKRPGAGTI.

Belongs to the KdsA family.

The protein resides in the cytoplasm. The catalysed reaction is D-arabinose 5-phosphate + phosphoenolpyruvate + H2O = 3-deoxy-alpha-D-manno-2-octulosonate-8-phosphate + phosphate. It functions in the pathway carbohydrate biosynthesis; 3-deoxy-D-manno-octulosonate biosynthesis; 3-deoxy-D-manno-octulosonate from D-ribulose 5-phosphate: step 2/3. Its pathway is bacterial outer membrane biogenesis; lipopolysaccharide biosynthesis. This is 2-dehydro-3-deoxyphosphooctonate aldolase from Rhodopseudomonas palustris (strain BisB5).